We begin with the raw amino-acid sequence, 245 residues long: Chymotrypsin B (245 aa).

Intrachain disulfides connect cysteine 1-cysteine 121, cysteine 42-cysteine 58, cysteine 135-cysteine 201, cysteine 167-cysteine 182, and cysteine 191-cysteine 220. A propeptide spanning residues 14–15 (AR) is cleaved from the precursor. One can recognise a Peptidase S1 domain in the interval 16-243 (IVNGEEAVPH…LRGWVDQILA (228 aa)). Active-site charge relay system residues include histidine 57 and aspartate 101. Serine 195 serves as the catalytic Charge relay system.

It belongs to the peptidase S1 family.

The protein resides in the secreted. It localises to the extracellular space. It carries out the reaction Preferential cleavage: Tyr-|-Xaa, Trp-|-Xaa, Phe-|-Xaa, Leu-|-Xaa.. The protein is Chymotrypsin B of Gadus morhua (Atlantic cod).